The sequence spans 70 residues: Uteroglobin (70 aa).

The protein belongs to the secretoglobin family. In terms of assembly, antiparallel homodimer; disulfide-linked. Interaction with LMBR1L is controversial. As to expression, club cells (nonciliated cells of the surface epithelium of the pulmonary airways).

It localises to the secreted. In terms of biological role, binds phosphatidylcholine, phosphatidylinositol, polychlorinated biphenyls (PCB) and weakly progesterone, potent inhibitor of phospholipase A2. The polypeptide is Uteroglobin (SCGB1A1) (Macaca fuscata fuscata (Japanese macaque)).